The primary structure comprises 1046 residues: Suppressor of Mek1 (1046 aa).

One can recognise a WH1 domain in the interval 1–101 (MEPLRKRVKV…QDIWENILQY (101 aa)). The disordered stretch occupies residues 626-1046 (FESPETSCNN…SSPTPSELHV (421 aa)). Over residues 665-689 (IDEEEEEAYFNRDDDSEDSDDEDEL) the composition is skewed to acidic residues. Positions 695-713 (NNNNNNNNNNKQICTNNEN) are enriched in low complexity. Residues 714–727 (NMEKNDDNIEKDNE) are compositionally biased toward basic and acidic residues. Acidic residues predominate over residues 743–752 (YEDEDDEDDE). The span at 753–783 (INKSVESDDIVEKHEIIDKNEKKDEIMKENN) shows a compositional bias: basic and acidic residues. Acidic residues predominate over residues 784-803 (DSDNDDNDNNDNDNDNDNNS). Residues 804-820 (DIENKNHLNNNGNNENN) are compositionally biased toward low complexity. Basic and acidic residues-rich tracts occupy residues 826–855 (VQDK…KENL) and 862–876 (EKVK…KKEN). Positions 889-905 (SNNSNNNNNNNNNNSNN) are enriched in low complexity. Basic and acidic residues predominate over residues 909–935 (GDNRKTTPKRKLDYEKNESVVSKKIDK). Over residues 958 to 995 (NNNNSNNNNNNNNNNNNNNNNNNNNNNNNNNNNNNNQN) the composition is skewed to low complexity. A compositionally biased stretch (acidic residues) spans 996–1011 (DENELSSASEEEEEQL). Residues 1003–1022 (ASEEEEEQLENGKHIKKFKR) carry the Nuclear localization signal motif. The segment covering 1028 to 1038 (NNSSNNSNNSS) has biased composition (low complexity).

Belongs to the SMEK family. In terms of assembly, interacts with ppp4c.

The protein resides in the cytoplasm. It localises to the cell cortex. It is found in the nucleus. Functionally, suppresses MEK1 null cell polarity, chemotaxis, and gene expression defects. Required for proper cytokinesis during vegetative growth, timely exit from the mound stage during development, and myosin II assembly. May be a regulatory subunit of serine/threonine-protein phosphatase 4 (PP4) and may control localization of PP4 to the nucleus. Involved in the regulation of some ppp4c functions, such as developmental progression, chemotaxis, expression of stress response genes and cell movement. In Dictyostelium discoideum (Social amoeba), this protein is Suppressor of Mek1 (smkA).